We begin with the raw amino-acid sequence, 248 residues long: Pulmonary surfactant-associated protein A1 (248 aa).

The signal sequence occupies residues 1–20 (MWLCPLALNLILMAASGAVC). A Collagen-like domain is found at 28–100 (GSPGIPGTPG…PGERGPPGLP (73 aa)). 4-hydroxyproline is present on residues P30, P33, P36, P42, P54, P57, P63, P67, and P70. The interval 31–101 (GIPGTPGSHG…GERGPPGLPA (71 aa)) is disordered. The span at 42-51 (PGRDGRDGLK) shows a compositional bias: basic and acidic residues. Positions 54–70 (PGPPGPMGPPGEMPCPP) are enriched in pro residues. The C-type lectin domain occupies 132–248 (MTVGEKVFSS…LYSRLTICEF (117 aa)). Cystine bridges form between C155/C246 and C224/C238. N207 carries an N-linked (GlcNAc...) asparagine glycan.

It belongs to the SFTPA family. In terms of assembly, oligomeric complex of 6 set of homotrimers. Interacts with CD93. (Microbial infection) Binds M.bovis cell surface protein Apa via its glycosylated sites; probably also recognizes other bacterial moieties. As to quaternary structure, (Microbial infection) Binds to the S.aureus extracellular adherence protein, Eap, thereby enhancing phagocytosis and killing of S.aureus by alveolar macrophages. In terms of assembly, (Microbial infection) Interacts with M.pneumoniae CARDS toxin; CARDS probably uses this protein as a receptor. In terms of processing, N-acetylated.

The protein resides in the secreted. Its subcellular location is the extracellular space. The protein localises to the extracellular matrix. It localises to the surface film. Functionally, in presence of calcium ions, it binds to surfactant phospholipids and contributes to lower the surface tension at the air-liquid interface in the alveoli of the mammalian lung and is essential for normal respiration. Enhances the expression of MYO18A/SP-R210 on alveolar macrophages. In terms of biological role, (Microbial infection) Recognition of M.tuberculosis by dendritic cells may occur partially via this molecule. Can recognize, bind, and opsonize pathogens to enhance their elimination by alveolar macrophages. (Microbial infection) Binds M.pneumoniae CARDS toxin, serves as one receptor for this pathogen. When SFTPA1 is down-regulated by siRNA, less toxin binds to human cells and less vacuolization (a symptom of M.pneumoniae infection) is seen. This chain is Pulmonary surfactant-associated protein A1 (SFTPA1), found in Homo sapiens (Human).